A 2542-amino-acid polypeptide reads, in one-letter code: Probable polyketide synthase 41 (2542 aa).

The Ketosynthase family 3 (KS3) domain occupies 11–441 (CNKVAIIGIG…GSNCCLIVSS (431 aa)). Active-site for beta-ketoacyl synthase activity residues include cysteine 177, histidine 318, and histidine 360. The interval 628–661 (GIKPSIIVGHSLGEISSSYCSGMIDLDTFCYLIY) is acyl/malonyl transferase. The active-site For acyl/malonyl transferase activity is serine 638. The interval 926–1059 (INHLGISNSN…ANFQLFSRGP (134 aa)) is N-terminal hotdog fold. The PKS/mFAS DH domain occupies 926 to 1231 (INHLGISNSN…FKSTTKIKDP (306 aa)). The Proton acceptor; for dehydratase activity role is filled by histidine 959. The segment at 1083–1231 (NLTKLSKQEL…FKSTTKIKDP (149 aa)) is C-terminal hotdog fold. Catalysis depends on aspartate 1145, which acts as the Proton donor; for dehydratase activity. The Carrier domain maps to 2459–2537 (NVELTVDQLI…SFIQLVKNSM (79 aa)). At serine 2496 the chain carries O-(pantetheine 4'-phosphoryl)serine.

It depends on pantetheine 4'-phosphate as a cofactor.

In terms of biological role, probable polyketide synthase. The protein is Probable polyketide synthase 41 (pks41) of Dictyostelium discoideum (Social amoeba).